Consider the following 847-residue polypeptide: DNA mismatch repair protein MutS (847 aa).

602–609 (GPNMSGKS) contributes to the ATP binding site.

This sequence belongs to the DNA mismatch repair MutS family.

In terms of biological role, this protein is involved in the repair of mismatches in DNA. It is possible that it carries out the mismatch recognition step. This protein has a weak ATPase activity. The chain is DNA mismatch repair protein MutS from Streptococcus uberis (strain ATCC BAA-854 / 0140J).